Reading from the N-terminus, the 506-residue chain is uncharacterized protein (506 aa).

Disordered stretches follow at residues 104–144 and 397–456; these read PNSS…ATSS and QQQK…DQLP. Over residues 130 to 144 the composition is skewed to low complexity; it reads ESSPTLSSSSLATSS. A compositionally biased stretch (basic and acidic residues) spans 405–443; the sequence is IKDEDKNEKENKSENEEKEKEKEKEKEKEKEKEKEKEKE. A coiled-coil region spans residues 405–455; sequence IKDEDKNEKENKSENEEKEKEKEKEKEKEKEKEKEKEKENEEGEEDNGDQL.

This is an uncharacterized protein from Dictyostelium discoideum (Social amoeba).